The following is a 150-amino-acid chain: 6,7-dimethyl-8-ribityllumazine synthase (150 aa).

Residues Phe-11, 43-45, and 67-69 contribute to the 5-amino-6-(D-ribitylamino)uracil site; these read VYD and AVI. 72–73 is a (2S)-2-hydroxy-3-oxobutyl phosphate binding site; it reads AT. The active-site Proton donor is His-75. Leu-100 is a binding site for 5-amino-6-(D-ribitylamino)uracil. Residue Arg-115 participates in (2S)-2-hydroxy-3-oxobutyl phosphate binding.

The protein belongs to the DMRL synthase family.

It carries out the reaction (2S)-2-hydroxy-3-oxobutyl phosphate + 5-amino-6-(D-ribitylamino)uracil = 6,7-dimethyl-8-(1-D-ribityl)lumazine + phosphate + 2 H2O + H(+). Its pathway is cofactor biosynthesis; riboflavin biosynthesis; riboflavin from 2-hydroxy-3-oxobutyl phosphate and 5-amino-6-(D-ribitylamino)uracil: step 1/2. Catalyzes the formation of 6,7-dimethyl-8-ribityllumazine by condensation of 5-amino-6-(D-ribitylamino)uracil with 3,4-dihydroxy-2-butanone 4-phosphate. This is the penultimate step in the biosynthesis of riboflavin. This Pyrobaculum neutrophilum (strain DSM 2338 / JCM 9278 / NBRC 100436 / V24Sta) (Thermoproteus neutrophilus) protein is 6,7-dimethyl-8-ribityllumazine synthase.